Here is a 1029-residue protein sequence, read N- to C-terminus: Error-prone DNA polymerase (1029 aa).

Belongs to the DNA polymerase type-C family. DnaE2 subfamily.

It is found in the cytoplasm. It carries out the reaction DNA(n) + a 2'-deoxyribonucleoside 5'-triphosphate = DNA(n+1) + diphosphate. Its function is as follows. DNA polymerase involved in damage-induced mutagenesis and translesion synthesis (TLS). It is not the major replicative DNA polymerase. The sequence is that of Error-prone DNA polymerase from Saccharophagus degradans (strain 2-40 / ATCC 43961 / DSM 17024).